The primary structure comprises 476 residues: Exoglucanase-6A (476 aa).

The signal sequence occupies residues methionine 1–alanine 16. 2 cysteine pairs are disulfide-bonded: cysteine 33–cysteine 50 and cysteine 44–cysteine 60. Residues cysteine 33 to cysteine 60 form the CBM1 domain. The interval threonine 67–serine 94 is disordered. Residue threonine 144 is glycosylated (O-linked (Man...) threonine). A glycan (O-linked (Man...) serine) is linked at serine 153. Tryptophan 163 and aspartate 165 together coordinate substrate. Residue asparagine 167 is glycosylated (N-linked (GlcNAc...) asparagine). A substrate binding loop 1 region spans residues tyrosine 200 to glycine 222. Aspartate 252 serves as the catalytic Proton donor. 6 residues coordinate substrate: histidine 297, tryptophan 300, asparagine 336, tryptophan 397, lysine 425, and glutamate 429. The substrate binding loop 2 stretch occupies residues tryptophan 423–phenylalanine 461. Aspartate 431 acts as the Proton acceptor in catalysis.

It belongs to the glycosyl hydrolase 6 (cellulase A) family. As to quaternary structure, monomer.

It carries out the reaction Hydrolysis of (1-&gt;4)-beta-D-glucosidic linkages in cellulose and cellotetraose, releasing cellobiose from the non-reducing ends of the chains.. Functionally, plays a central role in the recycling of plant biomass. The biological conversion of cellulose to glucose generally requires three types of hydrolytic enzymes: (1) Endoglucanases which cut internal beta-1,4-glucosidic bonds; (2) Exocellobiohydrolases that cut the disaccharide cellobiose from the non-reducing end of the cellulose polymer chain; (3) Beta-1,4-glucosidases which hydrolyze the cellobiose and other short cello-oligosaccharides to glucose. The sequence is that of Exoglucanase-6A from Humicola insolens (Soft-rot fungus).